The chain runs to 513 residues: Serine/threonine protein phosphatase 2A 55 kDa regulatory subunit B alpha isoform (513 aa).

Position 1 is an N-acetylmethionine (methionine 1). 6 WD repeats span residues glutamine 36–glycine 75, glutamate 112–isoleucine 153, alanine 232–asparagine 270, aspartate 281–serine 321, glutamate 340–alanine 378, and aspartate 483–alanine 513.

It belongs to the phosphatase 2A regulatory subunit B family. PP2A consists of a common heteromeric enzyme, composed of a catalytic subunit (subunits C), a constant regulatory subunit (subunit A), and a variety of regulatory subunits such as subunits B (the R2/B/PR55/B55, R3/B''/PR72/PR130/PR59 and R5/B'/B56 families). Interacts with SIC/RON3. In terms of tissue distribution, expressed ubiquitously.

In terms of biological role, the B regulatory subunit may modulate substrate selectivity and catalytic activity, and may also direct the localization of the catalytic enzyme to a particular subcellular compartment. The protein is Serine/threonine protein phosphatase 2A 55 kDa regulatory subunit B alpha isoform (PP2AB1) of Arabidopsis thaliana (Mouse-ear cress).